Consider the following 426-residue polypeptide: Enolase (426 aa).

Residue glutamine 163 coordinates (2R)-2-phosphoglycerate. Catalysis depends on glutamate 205, which acts as the Proton donor. Mg(2+) is bound by residues aspartate 242, glutamate 286, and aspartate 313. Positions 338, 367, 368, and 389 each coordinate (2R)-2-phosphoglycerate. Catalysis depends on lysine 338, which acts as the Proton acceptor.

Belongs to the enolase family. Requires Mg(2+) as cofactor.

It localises to the cytoplasm. It is found in the secreted. The protein localises to the cell surface. It carries out the reaction (2R)-2-phosphoglycerate = phosphoenolpyruvate + H2O. Its pathway is carbohydrate degradation; glycolysis; pyruvate from D-glyceraldehyde 3-phosphate: step 4/5. Functionally, catalyzes the reversible conversion of 2-phosphoglycerate (2-PG) into phosphoenolpyruvate (PEP). It is essential for the degradation of carbohydrates via glycolysis. In Helicobacter pylori (strain P12), this protein is Enolase.